The chain runs to 42 residues: Iota-conotoxin-like R11.16 (42 aa).

4 disulfide bridges follow: Cys-5/Cys-19, Cys-12/Cys-22, Cys-18/Cys-27, and Cys-21/Cys-36.

This sequence belongs to the conotoxin I1 superfamily. Expressed by the venom duct.

Its subcellular location is the secreted. Iota-conotoxins bind to voltage-gated sodium channels (Nav) and act as agonists by shifting the voltage-dependence of activation to more hyperpolarized levels. Produces general excitatory symptoms. This Conus radiatus (Rayed cone) protein is Iota-conotoxin-like R11.16.